Here is a 170-residue protein sequence, read N- to C-terminus: UPF0201 protein MJ1564 (170 aa).

The segment covering 133–148 (NEDELEEEEEKEDSEE) has biased composition (acidic residues). Residues 133–170 (NEDELEEEEEKEDSEEIKEGHKEENNLKIKVIDNSSGD) are disordered. Over residues 149–163 (IKEGHKEENNLKIKV) the composition is skewed to basic and acidic residues.

It belongs to the UPF0201 family.

The protein is UPF0201 protein MJ1564 of Methanocaldococcus jannaschii (strain ATCC 43067 / DSM 2661 / JAL-1 / JCM 10045 / NBRC 100440) (Methanococcus jannaschii).